The sequence spans 725 residues: Protein ECM27 (725 aa).

Transmembrane regions (helical) follow at residues 21–41 (VTFI…LGIC), 119–139 (VLGA…IIMS), 157–177 (LLFS…NQVT), 178–198 (VLNC…KLTF), 397–417 (ISDA…KLSC), 439–459 (LPII…CSIL), 470–490 (LVYL…TAFI), 526–546 (IQII…SLLA), 559–579 (ILGL…NSVG), 621–641 (LNSM…IGAF), 668–688 (FIVS…FFGG), and 704–724 (GISM…LELF).

The protein belongs to the Ca(2+):cation antiporter (CaCA) (TC 2.A.19) family.

It is found in the membrane. This is Protein ECM27 (ECM27) from Saccharomyces cerevisiae (strain ATCC 204508 / S288c) (Baker's yeast).